We begin with the raw amino-acid sequence, 671 residues long: DNA ligase (671 aa).

Residues 32–36 (DAEYD), 81–82 (SL), and Glu113 contribute to the NAD(+) site. Residue Lys115 is the N6-AMP-lysine intermediate of the active site. Arg136, Glu173, Lys290, and Lys314 together coordinate NAD(+). Cys408, Cys411, Cys426, and Cys432 together coordinate Zn(2+). The BRCT domain occupies 593–671 (EIDSPFAGKT…ETEMLHLLGS (79 aa)).

The protein belongs to the NAD-dependent DNA ligase family. LigA subfamily. Mg(2+) is required as a cofactor. Mn(2+) serves as cofactor.

It catalyses the reaction NAD(+) + (deoxyribonucleotide)n-3'-hydroxyl + 5'-phospho-(deoxyribonucleotide)m = (deoxyribonucleotide)n+m + AMP + beta-nicotinamide D-nucleotide.. In terms of biological role, DNA ligase that catalyzes the formation of phosphodiester linkages between 5'-phosphoryl and 3'-hydroxyl groups in double-stranded DNA using NAD as a coenzyme and as the energy source for the reaction. It is essential for DNA replication and repair of damaged DNA. The chain is DNA ligase from Escherichia coli O6:K15:H31 (strain 536 / UPEC).